Here is a 476-residue protein sequence, read N- to C-terminus: Adenosylhomocysteinase (476 aa).

Substrate contacts are provided by threonine 67, aspartate 142, and glutamate 202. Residue 203–205 coordinates NAD(+); it reads TTT. Substrate contacts are provided by lysine 232 and aspartate 236. NAD(+)-binding positions include asparagine 237, 266 to 271, glutamate 289, asparagine 324, 345 to 347, and asparagine 390; these read GYGDVG and IGH.

This sequence belongs to the adenosylhomocysteinase family. It depends on NAD(+) as a cofactor.

It localises to the cytoplasm. The catalysed reaction is S-adenosyl-L-homocysteine + H2O = L-homocysteine + adenosine. It functions in the pathway amino-acid biosynthesis; L-homocysteine biosynthesis; L-homocysteine from S-adenosyl-L-homocysteine: step 1/1. Its function is as follows. May play a key role in the regulation of the intracellular concentration of adenosylhomocysteine. The protein is Adenosylhomocysteinase of Synechococcus sp. (strain CC9902).